The primary structure comprises 245 residues: Biosynthetic peptidoglycan transglycosylase (245 aa).

The chain crosses the membrane as a helical span at residues 20-42; sequence VYAGSVFAGAWLATQLFYLVQIA.

This sequence belongs to the glycosyltransferase 51 family.

The protein resides in the cell inner membrane. It catalyses the reaction [GlcNAc-(1-&gt;4)-Mur2Ac(oyl-L-Ala-gamma-D-Glu-L-Lys-D-Ala-D-Ala)](n)-di-trans,octa-cis-undecaprenyl diphosphate + beta-D-GlcNAc-(1-&gt;4)-Mur2Ac(oyl-L-Ala-gamma-D-Glu-L-Lys-D-Ala-D-Ala)-di-trans,octa-cis-undecaprenyl diphosphate = [GlcNAc-(1-&gt;4)-Mur2Ac(oyl-L-Ala-gamma-D-Glu-L-Lys-D-Ala-D-Ala)](n+1)-di-trans,octa-cis-undecaprenyl diphosphate + di-trans,octa-cis-undecaprenyl diphosphate + H(+). It participates in cell wall biogenesis; peptidoglycan biosynthesis. Its function is as follows. Peptidoglycan polymerase that catalyzes glycan chain elongation from lipid-linked precursors. In Burkholderia ambifaria (strain MC40-6), this protein is Biosynthetic peptidoglycan transglycosylase.